Reading from the N-terminus, the 202-residue chain is Imidazoleglycerol-phosphate dehydratase (202 aa).

Belongs to the imidazoleglycerol-phosphate dehydratase family. In terms of assembly, homotrimer.

It catalyses the reaction D-erythro-1-(imidazol-4-yl)glycerol 3-phosphate = 3-(imidazol-4-yl)-2-oxopropyl phosphate + H2O. The protein operates within amino-acid biosynthesis; L-histidine biosynthesis; L-histidine from 5-phospho-alpha-D-ribose 1-diphosphate: step 6/9. The polypeptide is Imidazoleglycerol-phosphate dehydratase (HIS3) (Cryptococcus neoformans var. neoformans serotype D (strain B-3501A) (Filobasidiella neoformans)).